A 642-amino-acid polypeptide reads, in one-letter code: Threonine--tRNA ligase (642 aa).

One can recognise a TGS domain in the interval 1–61 (MPIITLPDGS…EHDASLEIIT (61 aa)). The tract at residues 244-535 (DHRKIGKQLD…LIEEYAGFFP (292 aa)) is catalytic. Zn(2+)-binding residues include C335, H386, and H512.

It belongs to the class-II aminoacyl-tRNA synthetase family. As to quaternary structure, homodimer. The cofactor is Zn(2+).

Its subcellular location is the cytoplasm. The catalysed reaction is tRNA(Thr) + L-threonine + ATP = L-threonyl-tRNA(Thr) + AMP + diphosphate + H(+). Its function is as follows. Catalyzes the attachment of threonine to tRNA(Thr) in a two-step reaction: L-threonine is first activated by ATP to form Thr-AMP and then transferred to the acceptor end of tRNA(Thr). Also edits incorrectly charged L-seryl-tRNA(Thr). The chain is Threonine--tRNA ligase from Vibrio cholerae serotype O1 (strain M66-2).